Reading from the N-terminus, the 557-residue chain is ETHYLENE INSENSITIVE 3-like 5 protein (557 aa).

2 disordered regions span residues 1 to 23 and 61 to 96; these read MVEVQDLEPLSPIQDYDEDDLEE and NLNSVISSPSSSTSASSSSSSSVIVRRTEASRRKKM. Residues 64–82 show a composition bias toward low complexity; it reads SVISSPSSSTSASSSSSSS. Residues 270–311 are a coiled coil; the sequence is ERVRRLARQSKCLQDKMMAKETDTWSRVLNQEEARLNRLKIS.

This sequence belongs to the EIN3 family.

Its subcellular location is the nucleus. Functionally, putative transcription factor that may be involved in the ethylene response pathway. This Arabidopsis thaliana (Mouse-ear cress) protein is ETHYLENE INSENSITIVE 3-like 5 protein (EIL5).